We begin with the raw amino-acid sequence, 669 residues long: MGKDIKDEILSLRDAIKKWDREYYVDSSPTVGDVTYDKALLRLQYLENRYPEYKTLDSPTLKFGSDLLNDFKEIEHSYPILSLDKAYDVKELLLWVEKMSLEGSNLGFDMGISAEPKIDGCSIVLYYKDGILEKALTRGDGRFGNNVIENVRTIKNVPLCIGERVELVLRGEIYITKKDFLKINHTLDDSYINARNLTSGILRRINSREVVNFPLDIFVYDILYSSLKLNTNHDAFDKLKHFGFKLNPFCKFFCGKNLGENIINYVKEIEEQRERFEYEIDGVVLKVNDFRLRDVLGYTSHHPKWSIAYKFESLRAVSKVIDIVVQVGRSGKITPVANIEKVLIAGAFITSASLHNQDYIDSIGLNVKDVVAISRRGDVIPAVELVVEKLSVGNFKIPNYCPSCKKSLIKEGAHLFCVNIHCPLKIMGHIKYFCSKKCMNIVGLSEKTIEFLFNMNFISSEIDLYTFDFDRLIGLKGFNFKRVNKLKRSIEESKNRPFKKLLLAMGIKDLGINTILLLINNNLNSFDAISLLCQDNKNALVKLLDIKGIGERIAFNIIRAFNDKIILDKFNFFKKLGFKMQEDSMNCVIDSSFLFGKKFCITGSFDEYSRHVLIDKITKKGAIFHSAVSRYLDFLLVGKSPGLKLKKANNLGIKILSLFDIKNLVNLDD.

Residues 33–37 (DVTYD), 82–83 (SL), and glutamate 115 contribute to the NAD(+) site. Lysine 117 (N6-AMP-lysine intermediate) is an active-site residue. NAD(+) is bound by residues arginine 138, glutamate 172, lysine 286, and lysine 310. The Zn(2+) site is built by cysteine 401, cysteine 404, cysteine 417, and cysteine 422. In terms of domain architecture, BRCT spans 589–669 (IDSSFLFGKK…DIKNLVNLDD (81 aa)).

Belongs to the NAD-dependent DNA ligase family. LigA subfamily. Requires Mg(2+) as cofactor. The cofactor is Mn(2+).

The enzyme catalyses NAD(+) + (deoxyribonucleotide)n-3'-hydroxyl + 5'-phospho-(deoxyribonucleotide)m = (deoxyribonucleotide)n+m + AMP + beta-nicotinamide D-nucleotide.. In terms of biological role, DNA ligase that catalyzes the formation of phosphodiester linkages between 5'-phosphoryl and 3'-hydroxyl groups in double-stranded DNA using NAD as a coenzyme and as the energy source for the reaction. It is essential for DNA replication and repair of damaged DNA. This is DNA ligase from Borrelia recurrentis (strain A1).